The primary structure comprises 507 residues: ATP synthase subunit alpha, chloroplastic (507 aa).

ATP is bound at residue 170 to 177; that stretch reads GDRQTGKT.

Belongs to the ATPase alpha/beta chains family. In terms of assembly, F-type ATPases have 2 components, CF(1) - the catalytic core - and CF(0) - the membrane proton channel. CF(1) has five subunits: alpha(3), beta(3), gamma(1), delta(1), epsilon(1). CF(0) has four main subunits: a, b, b' and c.

The protein localises to the plastid. It is found in the chloroplast thylakoid membrane. It carries out the reaction ATP + H2O + 4 H(+)(in) = ADP + phosphate + 5 H(+)(out). Produces ATP from ADP in the presence of a proton gradient across the membrane. The alpha chain is a regulatory subunit. The protein is ATP synthase subunit alpha, chloroplastic of Vitis vinifera (Grape).